The following is a 445-amino-acid chain: Oxysterols receptor LXR-alpha (445 aa).

Disordered stretches follow at residues Met-1–Asn-34 and Ala-63–Pro-86. A transactivation AF-1; required for ligand-independent transactivation function region spans residues Met-1–Glu-94. A DNA-binding region (nuclear receptor) is located at residues Asn-93–Ser-168. NR C4-type zinc fingers lie at residues Cys-96 to Cys-116 and Cys-132 to Cys-156. Position 191 is a phosphoserine (Ser-191). The interval Gln-203–Glu-445 is transactivation AF-2; required for ligand-dependent transactivation function; mediates interaction with CCAR2. The 239-residue stretch at Glu-207–Glu-445 folds into the NR LBD domain.

Belongs to the nuclear hormone receptor family. NR1 subfamily. In terms of assembly, heterodimer of NR1H3 and RXR (retinoic acid receptor). Interacts with CCAR2 (via N-terminus) in a ligand-independent manner. Interacts with SIRT1 and this interaction is inhibited by CCAR2. Ubiquitinated. Ubiquitination by UBR5 leads to its degradation: UBR5 specifically recognizes and binds ligand-bound NR1H3 when it is not associated with coactivators (NCOAs). In presence of NCOAs, the UBR5-degron is not accessible, preventing its ubiquitination and degradation.

It localises to the nucleus. The protein resides in the cytoplasm. Functionally, nuclear receptor that exhibits a ligand-dependent transcriptional activation activity. Interaction with retinoic acid receptor (RXR) shifts RXR from its role as a silent DNA-binding partner to an active ligand-binding subunit in mediating retinoid responses through target genes defined by LXRES. LXRES are DR4-type response elements characterized by direct repeats of two similar hexanuclotide half-sites spaced by four nucleotides. Plays an important role in the regulation of cholesterol homeostasis, regulating cholesterol uptake through MYLIP-dependent ubiquitination of LDLR, VLDLR and LRP8. Interplays functionally with RORA for the regulation of genes involved in liver metabolism. Induces LPCAT3-dependent phospholipid remodeling in endoplasmic reticulum (ER) membranes of hepatocytes, driving SREBF1 processing and lipogenesis. Via LPCAT3, triggers the incorporation of arachidonate into phosphatidylcholines of ER membranes, increasing membrane dynamics and enabling triacylglycerols transfer to nascent very low-density lipoprotein (VLDL) particles. Via LPCAT3 also counteracts lipid-induced ER stress response and inflammation, likely by modulating SRC kinase membrane compartmentalization and limiting the synthesis of lipid inflammatory mediators. The sequence is that of Oxysterols receptor LXR-alpha (Nr1h3) from Mus musculus (Mouse).